The sequence spans 150 residues: UPF0735 ACT domain-containing protein Csac_0995 (150 aa).

An ACT domain is found at 72-147 (TLALVLQDVP…GVKKIEILGR (76 aa)).

It belongs to the UPF0735 family.

This Caldicellulosiruptor saccharolyticus (strain ATCC 43494 / DSM 8903 / Tp8T 6331) protein is UPF0735 ACT domain-containing protein Csac_0995.